A 433-amino-acid chain; its full sequence is Probable M18 family aminopeptidase 2 (433 aa).

Residues His-79, His-153, and His-404 each contribute to the Zn(2+) site.

It belongs to the peptidase M18 family. Zn(2+) serves as cofactor.

This Mycobacterium bovis (strain ATCC BAA-935 / AF2122/97) protein is Probable M18 family aminopeptidase 2 (apeB).